A 310-amino-acid chain; its full sequence is Isoaspartyl peptidase/L-asparaginase (310 aa).

Thr167 acts as the Nucleophile in catalysis. Residues 195–198 and 218–221 each bind substrate; these read RVGD and TGHG.

It belongs to the Ntn-hydrolase family. As to quaternary structure, heterodimer of an alpha and beta chain produced by autocleavage. In terms of processing, cleaved into an alpha and beta chain by autocatalysis; this activates the enzyme. The N-terminal residue of the beta subunit is responsible for the nucleophile hydrolase activity.

It is found in the cytoplasm. It catalyses the reaction L-asparagine + H2O = L-aspartate + NH4(+). The catalysed reaction is Cleavage of a beta-linked Asp residue from the N-terminus of a polypeptide.. Its function is as follows. Has both L-asparaginase and beta-aspartyl peptidase activity. Does not have aspartylglucosaminidase activity and is inactive toward GlcNAc-L-Asn. Likewise, has no activity toward glutamine. The protein is Isoaspartyl peptidase/L-asparaginase (asrgl1) of Danio rerio (Zebrafish).